Consider the following 492-residue polypeptide: G protein-activated inward rectifier potassium channel 1 (492 aa).

Over 1–72 (MSALRRKLGD…LFTTLVDLKW (72 aa)) the chain is Cytoplasmic. Residues 16–35 (STSASGGGLPPPRAAPRGKR) are disordered. Residues 73–97 (RWNLFIFVLTYTVAWLFMASMWWVI) traverse the membrane as a helical segment. Topologically, residues 98–121 (AYMRGDLNKAHDDSYTPCVANVYN) are extracellular. The helical; Pore-forming intramembrane region spans 122 to 133 (FPSAFLFFIETE). An intramembrane region (pore-forming) is located at residues 134–140 (ATIGYGY). A Selectivity filter motif is present at residues 135-140 (TIGYGY). Residues 141–149 (RYITDKCPE) lie on the Extracellular side of the membrane. The helical transmembrane segment at 150–171 (GIILFLFQSILGSIVDAFLIGC) threads the bilayer. The Cytoplasmic portion of the chain corresponds to 172 to 492 (MFIKMSQPKK…LRKMNSDRFT (321 aa)). Positions 174–201 (IKMSQPKKRAETLMFSEHAAISMRDGKL) are polyphosphoinositide (PIP2)-binding. Residues 452 to 492 (SDPMSQSVADLPPKLQKLSGGGRMEGNLPPKLRKMNSDRFT) form a disordered region.

This sequence belongs to the inward rectifier-type potassium channel (TC 1.A.2.1) family. KCNJ3 subfamily. Associates with KCNJ5/GIRK4 or KCNJ6/GIRK2 or KCNJ9/GIRK3 to form a G-protein activated heteromultimer pore-forming unit. The resulting inward current is much larger.

Its subcellular location is the membrane. It carries out the reaction K(+)(in) = K(+)(out). With respect to regulation, heteromultimer composed of KCNJ3/GIRK1 and KCNJ5/GIRK4 is activated by phosphatidylinositol 4,5 biphosphate (PtdIns(4,5)P2). Its function is as follows. Inward rectifier potassium channels are characterized by a greater tendency to allow potassium to flow into the cell rather than out of it. Their voltage dependence is regulated by the concentration of extracellular potassium; as external potassium is raised, the voltage range of the channel opening shifts to more positive voltages. The inward rectification is mainly due to the blockage of outward current by internal magnesium. This potassium channel is controlled by G proteins. This receptor plays a crucial role in regulating the heartbeat. The chain is G protein-activated inward rectifier potassium channel 1 (KCNJ3) from Gallus gallus (Chicken).